The sequence spans 331 residues: 5-formaminoimidazole-4-carboxamide-1-(beta)-D-ribofuranosyl 5'-monophosphate synthetase (331 aa).

H9 and S69 together coordinate 5-amino-1-(5-phospho-beta-D-ribosyl)imidazole-4-carboxamide. One can recognise an ATP-grasp domain in the interval 76–322 (VELVEKMKVP…IAMELKQGLE (247 aa)). ATP is bound by residues 120 to 179 (PDDI…VPVY) and E201. N229 contacts 5-amino-1-(5-phospho-beta-D-ribosyl)imidazole-4-carboxamide. E267 and E280 together coordinate Mg(2+).

Belongs to the phosphohexose mutase family. Mg(2+) is required as a cofactor. Mn(2+) serves as cofactor.

It catalyses the reaction 5-amino-1-(5-phospho-beta-D-ribosyl)imidazole-4-carboxamide + formate + ATP = 5-formamido-1-(5-phospho-D-ribosyl)imidazole-4-carboxamide + ADP + phosphate. It participates in purine metabolism; IMP biosynthesis via de novo pathway; 5-formamido-1-(5-phospho-D-ribosyl)imidazole-4-carboxamide from 5-amino-1-(5-phospho-D-ribosyl)imidazole-4-carboxamide (formate route): step 1/1. Catalyzes the ATP- and formate-dependent formylation of 5-aminoimidazole-4-carboxamide-1-beta-d-ribofuranosyl 5'-monophosphate (AICAR) to 5-formaminoimidazole-4-carboxamide-1-beta-d-ribofuranosyl 5'-monophosphate (FAICAR) in the absence of folates. The protein is 5-formaminoimidazole-4-carboxamide-1-(beta)-D-ribofuranosyl 5'-monophosphate synthetase of Thermococcus kodakarensis (strain ATCC BAA-918 / JCM 12380 / KOD1) (Pyrococcus kodakaraensis (strain KOD1)).